We begin with the raw amino-acid sequence, 283 residues long: Elongation factor Ts (283 aa).

The interval 80–83 (TDFV) is involved in Mg(2+) ion dislocation from EF-Tu.

This sequence belongs to the EF-Ts family.

It is found in the cytoplasm. Its function is as follows. Associates with the EF-Tu.GDP complex and induces the exchange of GDP to GTP. It remains bound to the aminoacyl-tRNA.EF-Tu.GTP complex up to the GTP hydrolysis stage on the ribosome. This is Elongation factor Ts from Haemophilus influenzae (strain 86-028NP).